The sequence spans 375 residues: MGKDFKSLVTRCIYVGKMNDNAKKLKIATEELKDLGNNVMKRVKLCEEQQQMKRLDKVQTWLRQADTVIKEAEEYFLMSSSSSSSGLISSSHKMEKKICKKLKEVQEIKSRGMFEVVAESTGGIGGGAGGGLTIKDSDEQTIGLEAVSGLVWRCLTMENTGIIGLYGVEGVGKTTVLTQVNNRLLQQKANGFDFVLWVFVSKNLNLQKIQDTIREKIGFLDRTWTSKSEEEKAAKIFEILSKRRFALFLDDVWEKVDLVKAGVPPPDAQNRSKIVFTTCSEEVCKEMSAQTKIKVEKLAWERAWDLFKKNVGEDTIKSHPDIAKVAQEVAARCDGLPLALVTIGRAMASKKTPQEWRDALYILSNSPPNFSGQIS.

The NB-ARC domain maps to 158–372 (ENTGIIGLYG…LSNSPPNFSG (215 aa)). 167-174 (GVEGVGKT) is a binding site for ATP.

In terms of biological role, possible disease resistance protein. The polypeptide is Probable disease resistance protein At1g52660 (Arabidopsis thaliana (Mouse-ear cress)).